The following is a 440-amino-acid chain: Transposon Ty1-DR3 Gag polyprotein (440 aa).

3 stretches are compositionally biased toward polar residues: residues Met-1 to Pro-10, Thr-48 to Ser-60, and Gln-127 to Phe-152. Disordered regions lie at residues Met-1 to Gln-93, Pro-126 to Pro-173, and Gly-352 to Tyr-440. Positions Thr-153 to Thr-165 are enriched in low complexity. The RNA-binding stretch occupies residues Asn-299 to His-401. Residues Asn-402–Asn-428 show a composition bias toward polar residues. Ser-416 is subject to Phosphoserine. Over residues Asn-429–Tyr-440 the composition is skewed to basic and acidic residues.

As to quaternary structure, homotrimer.

The protein resides in the cytoplasm. Functionally, capsid protein (CA) is the structural component of the virus-like particle (VLP), forming the shell that encapsulates the retrotransposons dimeric RNA genome. The particles are assembled from trimer-clustered units and there are holes in the capsid shells that allow for the diffusion of macromolecules. CA also has nucleocapsid-like chaperone activity, promoting primer tRNA(i)-Met annealing to the multipartite primer-binding site (PBS), dimerization of Ty1 RNA and initiation of reverse transcription. In Saccharomyces cerevisiae (strain ATCC 204508 / S288c) (Baker's yeast), this protein is Transposon Ty1-DR3 Gag polyprotein (TY1A-DR3).